The chain runs to 250 residues: Pyrroloquinoline-quinone synthase (250 aa).

This sequence belongs to the PqqC family.

The enzyme catalyses 6-(2-amino-2-carboxyethyl)-7,8-dioxo-1,2,3,4,7,8-hexahydroquinoline-2,4-dicarboxylate + 3 O2 = pyrroloquinoline quinone + 2 H2O2 + 2 H2O + H(+). It functions in the pathway cofactor biosynthesis; pyrroloquinoline quinone biosynthesis. Functionally, ring cyclization and eight-electron oxidation of 3a-(2-amino-2-carboxyethyl)-4,5-dioxo-4,5,6,7,8,9-hexahydroquinoline-7,9-dicarboxylic-acid to PQQ. This Xanthomonas campestris pv. campestris (strain 8004) protein is Pyrroloquinoline-quinone synthase.